A 65-amino-acid polypeptide reads, in one-letter code: U12-theraphotoxin-Cg1a (65 aa).

The N-terminal stretch at 1–21 is a signal peptide; it reads MKTSVLLFMLGLTFLFDGLAA. Residues 22 to 29 constitute a propeptide that is removed on maturation; sequence INLQEGER. 3 disulfide bridges follow: C31-C45, C38-C50, and C44-C57.

Belongs to the neurotoxin 10 (Hwtx-1) family. 31 (Jztx-15) subfamily. Expressed by the venom gland.

It is found in the secreted. Functionally, probable ion channel inhibitor. The sequence is that of U12-theraphotoxin-Cg1a from Chilobrachys guangxiensis (Chinese earth tiger tarantula).